Reading from the N-terminus, the 85-residue chain is U4-theraphotoxin-Hhn1a (85 aa).

The signal sequence occupies residues 1–22 (MKVTLIVILTCAAVLVLHTTAA). Residues 23 to 48 (EELEAESQLMEVGMPDTELAAVDEER) constitute a propeptide that is removed on maturation. Intrachain disulfides connect C52–C66, C56–C77, and C71–C82.

It belongs to the neurotoxin 12 (Hwtx-2) family. 02 (Hwtx-2) subfamily. As to quaternary structure, monomer. As to expression, expressed by the venom gland.

The protein localises to the secreted. Neurotoxin active on both insects and mammals. This is U4-theraphotoxin-Hhn1a from Cyriopagopus hainanus (Chinese bird spider).